We begin with the raw amino-acid sequence, 94 residues long: Translation initiation factor IF-1 (94 aa).

Positions 1-72 (MAKEELIQFE…EKGRLIFRHK (72 aa)) constitute an S1-like domain. The segment at 71-94 (HKDERPGGTGAPRSGPPRGQFRRR) is disordered.

Belongs to the IF-1 family. In terms of assembly, component of the 30S ribosomal translation pre-initiation complex which assembles on the 30S ribosome in the order IF-2 and IF-3, IF-1 and N-formylmethionyl-tRNA(fMet); mRNA recruitment can occur at any time during PIC assembly.

It localises to the cytoplasm. Its function is as follows. One of the essential components for the initiation of protein synthesis. Stabilizes the binding of IF-2 and IF-3 on the 30S subunit to which N-formylmethionyl-tRNA(fMet) subsequently binds. Helps modulate mRNA selection, yielding the 30S pre-initiation complex (PIC). Upon addition of the 50S ribosomal subunit IF-1, IF-2 and IF-3 are released leaving the mature 70S translation initiation complex. The protein is Translation initiation factor IF-1 of Rhodopseudomonas palustris (strain HaA2).